The chain runs to 135 residues: uncharacterized protein (135 aa).

In terms of domain architecture, HotDog ACOT-type spans 8 to 123; sequence PKGIIVLKTL…IFIYVAINKT (116 aa).

The protein belongs to the acyl coenzyme A hydrolase family.

This is an uncharacterized protein from Buchnera aphidicola subsp. Acyrthosiphon pisum (strain APS) (Acyrthosiphon pisum symbiotic bacterium).